A 664-amino-acid chain; its full sequence is Armadillo repeat protein involved in nucleocytoplasmic transport Syo2 (664 aa).

An ARM repeat occupies 77–119 (GLVSKLIDRISDDSVEVVVEATGALRNLAIEEGYSICMDMYRK).

Belongs to the nuclear import and ribosome assembly adapter family. Forms a heterotrimeric complex with rpl5 and rpl11a or rpl11b; interaction of this complex with kap104 allows the nuclear import of the heterotrimer. Component of a hexameric 5S RNP precursor complex; this complex acts as a precursor for ribosome assembly.

The protein resides in the cytoplasm. It is found in the nucleus. Nuclear import adapter that specifically recruits the two functionally and topologically linked ribosomal proteins rpl5 and rpl11 (encoded by rpl11a and rpl11b). Guarantees that this cargo pair remains bound together from the time of synthesis in the cytoplasm until delivery to the nascent 5S rRNA in the nucleus. This Schizosaccharomyces pombe (strain 972 / ATCC 24843) (Fission yeast) protein is Armadillo repeat protein involved in nucleocytoplasmic transport Syo2.